The chain runs to 348 residues: Casein kinase II subunit alpha (348 aa).

In terms of domain architecture, Protein kinase spans 55-340; sequence YEIVRKIGRG…PLEAMEHPFF (286 aa). Residues 61–69 and lysine 84 each bind ATP; that span reads IGRGKFSEV. Aspartate 172 (proton acceptor) is an active-site residue.

The protein belongs to the protein kinase superfamily. Ser/Thr protein kinase family. CK2 subfamily. As to quaternary structure, tetramer of two alpha and two beta chains.

The protein resides in the cytoplasm. It carries out the reaction L-seryl-[protein] + ATP = O-phospho-L-seryl-[protein] + ADP + H(+). It catalyses the reaction L-threonyl-[protein] + ATP = O-phospho-L-threonyl-[protein] + ADP + H(+). Functionally, casein kinases are operationally defined by their preferential utilization of acidic proteins such as caseins as substrates. The alpha chain contains the catalytic site. This chain is Casein kinase II subunit alpha, found in Theileria annulata.